A 589-amino-acid polypeptide reads, in one-letter code: Serine/threonine-protein kinase STE7 homolog (589 aa).

Positions 1–18 (MTRTTRIDTQEATKHKDL) are enriched in basic and acidic residues. Disordered regions lie at residues 1–162 (MTRT…DPDN) and 185–232 (RQHY…PASS). Residues 24–33 (PLSLSSNPNP) show a composition bias toward low complexity. The segment covering 57–69 (VKSTSGSLRSSDM) has biased composition (polar residues). A compositionally biased stretch (low complexity) spans 92–121 (PTASSSATSTPTSNITGSSSASSIQFAQKS). 2 stretches are compositionally biased toward polar residues: residues 127 to 136 (IVSQTLSRPS) and 144 to 162 (SGYS…DPDN). Over residues 185–203 (RQHYQNSHHHLPTTNRKRQ) the composition is skewed to basic residues. Positions 206–220 (ISSISPTKSSAASSP) are enriched in low complexity. Residues 249–565 (LLTLKQLGSG…QLLEDKEHFF (317 aa)) enclose the Protein kinase domain. Residues 255–263 (LGSGNSGSV) and Lys-278 contribute to the ATP site. Asp-374 (proton acceptor) is an active-site residue. Ser-402 bears the Phosphoserine mark. Thr-408 carries the post-translational modification Phosphothreonine. Residues 473-499 (IAAERNGQNSPSRSRKNKQKGNGYNSY) form a disordered region.

Belongs to the protein kinase superfamily. STE Ser/Thr protein kinase family. MAP kinase kinase subfamily.

It catalyses the reaction L-seryl-[protein] + ATP = O-phospho-L-seryl-[protein] + ADP + H(+). It carries out the reaction L-threonyl-[protein] + ATP = O-phospho-L-threonyl-[protein] + ADP + H(+). The catalysed reaction is L-tyrosyl-[protein] + ATP = O-phospho-L-tyrosyl-[protein] + ADP + H(+). The protein is Serine/threonine-protein kinase STE7 homolog (HST7) of Candida albicans (strain WO-1) (Yeast).